The sequence spans 428 residues: Immunoglobulin superfamily containing leucine-rich repeat protein (428 aa).

The first 18 residues, 1–18 (MQELHLLWWALLLGLAQA), serve as a signal peptide directing secretion. The 32-residue stretch at 19–50 (CPEPCDCGEKYGFQIADCAYRDLEAVPPGFPA) folds into the LRRNT domain. N-linked (GlcNAc...) asparagine glycosylation is present at Asn-51. 5 LRR repeats span residues 51–72 (NVTA…AFRE), 75–96 (LLQS…ALAS), 99–122 (HLKS…HNLS), 123–144 (ALQL…AFRS), and 147–168 (ALRS…TFTP). In terms of domain architecture, LRRCT spans 180–231 (NPFDCTCGIVWLKTWALATAVSIPEQDNIACTSPHVLKGTPLSRLPPLPCSA). Residues 232–343 (PSVQLSYQPS…GSAESSVDVA (112 aa)) enclose the Ig-like domain. Cys-257 and Cys-327 are disulfide-bonded. A glycan (N-linked (GlcNAc...) asparagine) is linked at Asn-309.

Its subcellular location is the secreted. This Pongo abelii (Sumatran orangutan) protein is Immunoglobulin superfamily containing leucine-rich repeat protein (ISLR).